Here is a 397-residue protein sequence, read N- to C-terminus: Cercosporin biosynthesis regulatory protein CTB8 (397 aa).

Residues 26–53 (CTHCSSQKIRCTKERPACARCVNKGLLC) constitute a DNA-binding region (zn(2)-C6 fungal-type). 2 disordered regions span residues 63–90 (TRRH…APDS) and 173–198 (AEAS…ATTH). Polar residues predominate over residues 74–87 (PETTISNAPTSSVA). Over residues 179–197 (PSSSSSPPSQRSDGGRATT) the composition is skewed to low complexity.

The protein resides in the nucleus. Transcription regulator of the gene cluster that mediates the biosynthesis of cercosporin, a light-activated, non-host-selective toxin. The perylenequinone chromophore of cercosporin absorbs light energy to attain an electronically-activated triplet state and produces active oxygen species such as the hydroxyl radical, superoxide, hydrogen peroxide or singlet oxygen upon reaction with oxygen molecules. These reactive oxygen species cause damage to various cellular components including lipids, proteins and nucleic acids. The chain is Cercosporin biosynthesis regulatory protein CTB8 from Cercospora beticola (Sugarbeet leaf spot fungus).